A 391-amino-acid polypeptide reads, in one-letter code: MSRFLICSFALVLLYPAGIDMYLVGLPRIAADLNASEAQLHIAFSVYLAGMAAAMLFAGKVADRSGRKPVAIPGAALFIIASVFCSLAETSTLFLAGRFLQGLGAGCCYVVAFAILRDTLDDRRRAKVLSLLNGITCIIPVLAPVLGHLIMLKFPWQSLFWAMAMMGIAVLMLSLFILKETRPAAPAASDKPRENSESLLNRFFLSRVVITTLSVSVILTFVNTSPVLLMEIMGFERGEYATIMALTAGVSMTVSFSTPFALGIFKPRTLMITSQVLFLAAGITLAVSPSHAVSLFGITLICAGFSVGFGVAMSQALGPFSLRAGVASSTLGIAQVCGSSLWIWLAAVVGIGAWNMLIGILIACSIVSLLLIMFVAPGRPVAAHEEIHHHA.

Helical transmembrane passes span 4 to 24, 42 to 62, 69 to 89, 93 to 113, 131 to 151, 158 to 178, 203 to 222, 245 to 265, 269 to 289, 293 to 313, 331 to 351, and 356 to 376; these read FLICSFALVLLYPAGIDMYLV, IAFSVYLAGMAAAMLFAGKVA, PVAIPGAALFIIASVFCSLAE, LFLAGRFLQGLGAGCCYVVAF, LLNGITCIIPVLAPVLGHLIM, SLFWAMAMMGIAVLMLSLFIL, FFLSRVVITTLSVSVILTFV, ALTAGVSMTVSFSTPFALGIF, TLMITSQVLFLAAGITLAVSP, VSLFGITLICAGFSVGFGVAM, LGIAQVCGSSLWIWLAAVVGI, and MLIGILIACSIVSLLLIMFVA.

This sequence belongs to the major facilitator superfamily. DHA1 family. MdtL (TC 2.A.1.2.22) subfamily.

The protein resides in the cell inner membrane. Its function is as follows. Confers resistance to chloramphenicol. The chain is Multidrug resistance protein MdtL from Escherichia coli (strain 55989 / EAEC).